We begin with the raw amino-acid sequence, 411 residues long: Aspartate kinase (411 aa).

The ACT domain occupies 265–348; it reads LTIRGVPDTP…KIAKVSIVGV (84 aa).

This sequence belongs to the aspartokinase family.

It localises to the cytoplasm. The catalysed reaction is L-aspartate + ATP = 4-phospho-L-aspartate + ADP. It functions in the pathway amino-acid biosynthesis; L-lysine biosynthesis via DAP pathway; (S)-tetrahydrodipicolinate from L-aspartate: step 1/4. It participates in amino-acid biosynthesis; L-methionine biosynthesis via de novo pathway; L-homoserine from L-aspartate: step 1/3. Its pathway is amino-acid biosynthesis; L-threonine biosynthesis; L-threonine from L-aspartate: step 1/5. Allosterically feedback inhibited by L-lysine and L-threonine individually and also subject to a concerted feedback inhibition by these amino acids. Involved in the biosynthesis of L-aspartate-beta-semialdehyde which is a central intermediate in the biosynthesis of different amino acids (L-lysine, L-methionine, L-threonine). Catalyzes the phosphorylation of the beta-carboxyl group of L-aspartate to yield 4-phospho-L-aspartate. The polypeptide is Aspartate kinase (Pseudomonas putida (strain ATCC 47054 / DSM 6125 / CFBP 8728 / NCIMB 11950 / KT2440)).